A 516-amino-acid chain; its full sequence is Protein phosphatase 1H (516 aa).

Disordered regions lie at residues 102-122 and 181-202; these read ADPSSVSYTPSRRRSSLPSGD and PPTCLGEESPNPQLHASASGSQ. The 401-residue stretch at 106-506 folds into the PPM-type phosphatase domain; the sequence is SVSYTPSRRR…DDISVFIIPL (401 aa). The span at 190 to 202 shows a compositional bias: polar residues; the sequence is PNPQLHASASGSQ.

This sequence belongs to the PP2C family.

It is found in the nucleus. It localises to the cytoplasm. The catalysed reaction is O-phospho-L-seryl-[protein] + H2O = L-seryl-[protein] + phosphate. It carries out the reaction O-phospho-L-threonyl-[protein] + H2O = L-threonyl-[protein] + phosphate. The chain is Protein phosphatase 1H (ppm1h) from Danio rerio (Zebrafish).